The chain runs to 442 residues: tRNA-2-methylthio-N(6)-dimethylallyladenosine synthase (442 aa).

Positions 5-122 (KKVFIKTLGC…LPEMIKRKQS (118 aa)) constitute an MTTase N-terminal domain. Cysteine 14, cysteine 51, cysteine 85, cysteine 159, cysteine 163, and cysteine 166 together coordinate [4Fe-4S] cluster. Positions 145–378 (KAEGAKAYVS…DLLNSNAQII (234 aa)) constitute a Radical SAM core domain. The TRAM domain maps to 380–442 (RQMVGTEQRI…LPNSLRGELI (63 aa)).

The protein belongs to the methylthiotransferase family. MiaB subfamily. In terms of assembly, monomer. The cofactor is [4Fe-4S] cluster.

It is found in the cytoplasm. It catalyses the reaction N(6)-dimethylallyladenosine(37) in tRNA + (sulfur carrier)-SH + AH2 + 2 S-adenosyl-L-methionine = 2-methylsulfanyl-N(6)-dimethylallyladenosine(37) in tRNA + (sulfur carrier)-H + 5'-deoxyadenosine + L-methionine + A + S-adenosyl-L-homocysteine + 2 H(+). Catalyzes the methylthiolation of N6-(dimethylallyl)adenosine (i(6)A), leading to the formation of 2-methylthio-N6-(dimethylallyl)adenosine (ms(2)i(6)A) at position 37 in tRNAs that read codons beginning with uridine. This is tRNA-2-methylthio-N(6)-dimethylallyladenosine synthase from Francisella philomiragia subsp. philomiragia (strain ATCC 25017 / CCUG 19701 / FSC 153 / O#319-036).